The primary structure comprises 184 residues: UPF0302 protein OB1778 (184 aa).

This sequence belongs to the UPF0302 family.

This Oceanobacillus iheyensis (strain DSM 14371 / CIP 107618 / JCM 11309 / KCTC 3954 / HTE831) protein is UPF0302 protein OB1778.